A 572-amino-acid chain; its full sequence is Methionine--tRNA ligase (572 aa).

The short motif at 11–21 is the 'HIGH' region element; it reads PYINGIKHLGN. Residues Cys143, Cys146, Cys156, and Cys159 each contribute to the Zn(2+) site. The 'KMSKS' region motif lies at 346-350; the sequence is QFSTS. ATP is bound at residue Thr349.

This sequence belongs to the class-I aminoacyl-tRNA synthetase family. MetG type 1 subfamily. As to quaternary structure, monomer. Zn(2+) serves as cofactor.

It is found in the cytoplasm. It carries out the reaction tRNA(Met) + L-methionine + ATP = L-methionyl-tRNA(Met) + AMP + diphosphate. In terms of biological role, is required not only for elongation of protein synthesis but also for the initiation of all mRNA translation through initiator tRNA(fMet) aminoacylation. This is Methionine--tRNA ligase from Cereibacter sphaeroides (strain ATCC 17029 / ATH 2.4.9) (Rhodobacter sphaeroides).